We begin with the raw amino-acid sequence, 300 residues long: Formylmethanofuran--tetrahydromethanopterin formyltransferase-like protein (300 aa).

This sequence belongs to the FTR family.

In Methanopyrus kandleri (strain AV19 / DSM 6324 / JCM 9639 / NBRC 100938), this protein is Formylmethanofuran--tetrahydromethanopterin formyltransferase-like protein.